The following is a 572-amino-acid chain: MLQEDKSSETMHDPSTRGVETRNVTAVDSPLETATTSESPETERTNVAPAKRDWRFWALLVSISLAGLLTALEGTITSTALPSIVNDLGGGHLYVWVVNGYLFAMTAMQPMYGQLANIFGRRWPMLGATALFVLGSGICGGATNIETLIAGRILQGIGASGTTVLTETIICDVVPLRERSKFLAIVMGMIFLGTALGPFFAGLIVQYSTWRWTFYLALPVGGAALVALFSFLKVKYQKETNLATKISTIDWAGNALFVAAISSVLIGLSWAGSVYAWSSFRVLVPLFVGIAGMGLFMVFEGSRFAPNPTVPLHLFGNRTSVGVMIMTFFHGIITIWQLYFMPVYFQGVLGSSPSRSGVQILATILAILPAAGIGGFLMTKMGRYKPIHYASWAVTLIGLGLFSLLDSGSSTGAWVGFQIVYSMGAGMLVPTLLPALLAPLSESDTALGAATWSFVRSFGMVWGTAIPAAVFNTRSDQLAPELINSPALRADIMGGKAYEHATSAFLGTLSDAASEQMKNVFSRSLRQTWLVSLAFAGMGLLAATLAREVPMRSELDTEYGMEERKPKKASEA.

Residues 1-15 are compositionally biased toward basic and acidic residues; that stretch reads MLQEDKSSETMHDPS. Positions 1–46 are disordered; that stretch reads MLQEDKSSETMHDPSTRGVETRNVTAVDSPLETATTSESPETERTN. Asn-23 carries an N-linked (GlcNAc...) asparagine glycan. The segment covering 29–39 has biased composition (low complexity); sequence SPLETATTSES. Helical transmembrane passes span 56-76, 88-108, 123-143, 156-176, 185-205, 212-232, 255-275, and 282-302; these read FWAL…EGTI, LGGG…MTAM, WPML…GGAT, GIGA…VVPL, IVMG…GLIV, WTFY…FSFL, ALFV…GSVY, and VLVP…FEGS. Asn-317 is a glycosylation site (N-linked (GlcNAc...) asparagine). Transmembrane regions (helical) follow at residues 321-341, 358-378, 386-406, 419-439, 451-471, and 529-549; these read VGVM…LYFM, VQIL…GFLM, PIHY…SLLD, IVYS…LLAP, TWSF…AAVF, and WLVS…AREV.

The protein belongs to the major facilitator superfamily.

It is found in the membrane. In terms of biological role, MFS-type transporter; part of the gene cluster that mediates the biosynthesis of pyrrocidines, fungal natural products containing a macrocyclic para-cyclophane connected to a decahydrofluorene ring system that show potent antibiotic activities toward Gram-negative bacteria. This Acremonium sp protein is MFS-type transporter pydD.